An 87-amino-acid chain; its full sequence is Small ribosomal subunit protein bS20 (87 aa).

The protein belongs to the bacterial ribosomal protein bS20 family.

In terms of biological role, binds directly to 16S ribosomal RNA. This is Small ribosomal subunit protein bS20 from Clostridium perfringens (strain 13 / Type A).